The primary structure comprises 151 residues: MRVSGRPMLLALLLLLSTVGDRGRAQSRGPADRQTLLRLLVELVQELKKFHIGDSKRLQLLGESDFALGRREATDYGADQEEQRVEIVPRDLRMKDKFLKHLTGPLYFSPKCSKHFHRLYHNTRDCTIPAYYKRCARLLTRLAVSPMCMER.

The signal sequence occupies residues 1 to 25; the sequence is MRVSGRPMLLALLLLLSTVGDRGRA. Disulfide bonds link cysteine 112–cysteine 148 and cysteine 126–cysteine 135.

This sequence belongs to the ALKAL family. Homodimer.

The protein resides in the secreted. Its subcellular location is the cell membrane. Cytokine that acts as a physiological ligand for receptor tyrosine kinases LTK and ALK, leading to their activation. Cytokine-binding is sufficient to activate LTK. In contrast, ALKAL2-driven activation of ALK is coupled with heparin-binding to ALK. Stimulation of ALK signaling is involved in neural development and regulation of energy expenditure. In Mus musculus (Mouse), this protein is ALK and LTK ligand 2.